A 546-amino-acid polypeptide reads, in one-letter code: Protein phosphatase 1G (546 aa).

Gly2 is lipidated: N-myristoyl glycine. Omega-N-methylarginine is present on Arg22. In terms of domain architecture, PPM-type phosphatase spans 26–505; that stretch reads PYGFSAMQGW…DNMTCIIICF (480 aa). Positions 60 and 61 each coordinate Mn(2+). Disordered regions lie at residues 116–139 and 161–328; these read QIAG…DVDN and GQNC…SDSG. A Phosphothreonine modification is found at Thr122. Residues 123–139 are compositionally biased toward acidic residues; sequence EDEDEKEKVADEDDVDN. Phosphoserine is present on Ser183. Acidic residues predominate over residues 259–312; sequence DSEDESDEAEEEEEDSEECSEEEDGYSSEEAENEEDEDDTEEAEEDDEEEEEEM. Lys383 is subject to N6-acetyllysine. 2 residues coordinate Mn(2+): Asp441 and Asp496. The tract at residues 512–546 is disordered; that stretch reads ELQPESGKRKLEEVLSTEGAEENGNSDKKKKAKRD. Ser527 is subject to Phosphoserine.

This sequence belongs to the PP2C family. In terms of assembly, interacts with NOL3; may dephosphorylate NOL3. Mg(2+) serves as cofactor. Requires Mn(2+) as cofactor. In terms of tissue distribution, widely expressed. Most abundant in testis, skeletal muscle, and heart.

It localises to the cytoplasm. It is found in the membrane. The enzyme catalyses O-phospho-L-seryl-[protein] + H2O = L-seryl-[protein] + phosphate. It catalyses the reaction O-phospho-L-threonyl-[protein] + H2O = L-threonyl-[protein] + phosphate. The sequence is that of Protein phosphatase 1G (PPM1G) from Homo sapiens (Human).